The sequence spans 317 residues: MIFVILEHILTHISFSIIAIVITTHLMTLLVHEIVGLCDSSEKGMIATFFCITGLLVTRWIYSGHFPLNDLYESLMFLSWSFSLILMVPYFKNHKNHFSTITAPSAICTQSFATSGLSTEIHQSEILVPALQSHWLMMHVSMMLLSYAALLCGSLLSIALLVITFRKNIDMIGFTNHLLIWPFSFGEIKYLNEKRSLLKNTSFLLFRNYHRYQLTQRLDHWSYRVIGLGFTFSTIGILSGAVWANEAWGSYWNWDPKETWAFITWTISAIYSHTRTNKSLQGMNSAIVASMGFLIIWICYFGVNLLGIGLHSYGSFT.

The next 7 membrane-spanning stretches (helical) occupy residues 13 to 35 (ISFSIIAIVITTHLMTLLVHEIV), 44 to 64 (GMIATFFCITGLLVTRWIYSG), 71 to 91 (LYESLMFLSWSFSLILMVPYF), 143 to 163 (MLLSYAALLCGSLLSIALLVI), 171 to 191 (MIGFTNHLLIWPFSFGEIKYL), 225 to 245 (VIGLGFTFSTIGILSGAVWAN), and 286 to 306 (AIVASMGFLIIWICYFGVNLL).

Belongs to the CcmF/CycK/Ccl1/NrfE/CcsA family. As to quaternary structure, may interact with Ccs1.

It localises to the plastid. Its subcellular location is the chloroplast thylakoid membrane. In terms of biological role, required during biogenesis of c-type cytochromes (cytochrome c6 and cytochrome f) at the step of heme attachment. The protein is Cytochrome c biogenesis protein CcsA of Illicium oligandrum (Star anise).